Here is a 433-residue protein sequence, read N- to C-terminus: Mitochondrial inner membrane magnesium transporter MIT1 (433 aa).

Residues 257 to 298 (TNKLLRDMMKIKNNLQKLSNLLNALRTNIEKILNNENDMKNM) are a coiled coil. Residues 360 to 380 (FILLNAKISFSTLLFSISSVV) traverse the membrane as a helical segment. At 381–396 (TSLFGMNLKNFVEDSN) the chain is on the extracellular side. The helical transmembrane segment at 397–417 (YAFIIVSIFVSVWSIIGIYVT) threads the bilayer. Over 418–433 (KNINTLLKFFDRYNFR) the chain is Mitochondrial matrix.

Belongs to the CorA metal ion transporter (MIT) (TC 1.A.35) family.

The protein localises to the mitochondrion inner membrane. Its function is as follows. Mitochondrial inner membrane magnesium transporter required for mitochondrial magnesium homeostasis. Involved in the development of the sporozoite in the mosquito vector midgut. The polypeptide is Mitochondrial inner membrane magnesium transporter MIT1 (Plasmodium berghei (strain Anka)).